A 203-amino-acid chain; its full sequence is Glycerol-3-phosphate acyltransferase (203 aa).

A run of 4 helical transmembrane segments spans residues 4–24 (LTFAMSGIAYLLGSVSNAVLI), 68–88 (IPVYLAWYLGIPPLYLGFIGI), 104–124 (GGKGVATALGALLPLGLDMGS), and 125–145 (FMIVTWLIVLLFTGYSSLAAI).

This sequence belongs to the PlsY family. Probably interacts with PlsX.

It localises to the cell inner membrane. The enzyme catalyses an acyl phosphate + sn-glycerol 3-phosphate = a 1-acyl-sn-glycero-3-phosphate + phosphate. It functions in the pathway lipid metabolism; phospholipid metabolism. Its function is as follows. Catalyzes the transfer of an acyl group from acyl-phosphate (acyl-PO(4)) to glycerol-3-phosphate (G3P) to form lysophosphatidic acid (LPA). This enzyme utilizes acyl-phosphate as fatty acyl donor, but not acyl-CoA or acyl-ACP. In Tolumonas auensis (strain DSM 9187 / NBRC 110442 / TA 4), this protein is Glycerol-3-phosphate acyltransferase.